The sequence spans 467 residues: MALSRIYSSKLASANKNLLPVITTYVRNASDSTDLKAVLSEKIPKEQERVKNFRKQFGATKVGEVTVDMMYGGMRGIKGLVCETSVLDPDEGIRFRGLSIPECQKVLPKAPGGAEPLPEGLFWLLITGDVPTKAQVDALSREWANRAALPSHVVTMLNNMPTTLHPMSQLSCAVTALNHESKYAKAYSEGVHKSKYWEYVYEDSMDLIAKLPVVAATIYRNTYRDGKGIGAIDPKKDWSANFTKMLGYEDEQFTELMRLYLTIHSDHEGGNVSAHTVHLVGSALSDPYLSFAAGMNGLAGPLHGLANQEVLVWLQKLRKELGDNASEDKVKDFIWKTLKSGQVVPGYGHAVLRKTDPRYTCQREFALKHLPNDPLFQLVSNIYKVVPPILTELGKVKNPWPNVDAHSGVLLQYYGLKEMNYYTVLFGVSRALGVLASLVWDRALGLPIERPKSMSTDGLMKAVGASK.

Active-site residues include H303, H349, and D404.

Belongs to the citrate synthase family. As to quaternary structure, homodimer.

It is found in the mitochondrion matrix. The catalysed reaction is oxaloacetate + acetyl-CoA + H2O = citrate + CoA + H(+). It functions in the pathway carbohydrate metabolism; tricarboxylic acid cycle; isocitrate from oxaloacetate: step 1/2. This is Probable citrate synthase 1, mitochondrial from Aedes aegypti (Yellowfever mosquito).